We begin with the raw amino-acid sequence, 132 residues long: Small ribosomal subunit protein uS8 (132 aa).

It belongs to the universal ribosomal protein uS8 family. Part of the 30S ribosomal subunit. Contacts proteins S5 and S12.

Functionally, one of the primary rRNA binding proteins, it binds directly to 16S rRNA central domain where it helps coordinate assembly of the platform of the 30S subunit. The polypeptide is Small ribosomal subunit protein uS8 (Mycolicibacterium gilvum (strain PYR-GCK) (Mycobacterium gilvum (strain PYR-GCK))).